The chain runs to 274 residues: (R)-stereoselective amidase (274 aa).

A CN hydrolase domain is found at 1-234 (MKIELVQLAG…EVRHVVELDL (234 aa)). Catalysis depends on Glu-40, which acts as the Proton acceptor. Lys-108 functions as the Proton donor in the catalytic mechanism. Residue Cys-140 is the Nucleophile of the active site.

In terms of assembly, monomer.

It catalyses the reaction (R)-piperazine-2-carboxamide + H2O = (R)-piperazine-2-carboxylate + NH4(+). The enzyme catalyses beta-alaninamide + H2O = beta-alanine + NH4(+). Its activity is regulated as follows. Completely inhibited by p-chloromercuribenzoate, N-ethylmaleimide, MnSO(4), MnCl(2), CoCl(2), NiCl(2), CuSO(4), CuCl(2), ZnSO(4), ZnCl(2), AgNO(3), CdCl(2), HgCl(2) and PbCl(2). Partially inhibited by FeCl(3) and Fe(NH(4))(2)(SO(4))(2). Slightly enhanced by dithiothreitol. Unaffected by LiBr, H(2)BO(3), NaCl, MgSO(4), MgCl(2), AlCl(3), KCl, CaCl(2), CrCl(3), RbCl, Na(2)MoO(4), (NH(4))(6)Mo(7)O(24), CsCl and BaCl(2). Unaffected by the chelating agents o-phenanthroline, 8-hydroxyquinoline, enthylenediaminetetraacetic acid and alpha,alpha'-dipyridyl. Not inhibited by the carbonyl reagents hydroxylamine, phenylhydrazine, hydrazine, D,L-penicillamine and D-cycloserine. Not affected by the serine protease inhibitor phenylmethanesulfonyl fluoride, the serine/cysteine protease inhibitor leupeptine or the aspartic protease inhibitor pepstatin. In terms of biological role, hydrolyzes (R)-piperazine-2-carboxamide and (R)-piperazine-2-tert-butylcarboxamide with strict R-stereoselectivity. Also active towards beta-alaninamide, piperidine-3-carboxmide, D-glutaminamide and slightly active towards L-glutaminamide and piperidine-4-carboxamide. The chain is (R)-stereoselective amidase from Pseudomonas sp.